The primary structure comprises 455 residues: ATP-dependent protease ATPase subunit HslU (455 aa).

Residues Ile19, 61 to 66, Asp268, Glu333, and Arg405 each bind ATP; that span reads GVGKTE.

The protein belongs to the ClpX chaperone family. HslU subfamily. As to quaternary structure, a double ring-shaped homohexamer of HslV is capped on each side by a ring-shaped HslU homohexamer. The assembly of the HslU/HslV complex is dependent on binding of ATP.

It localises to the cytoplasm. Its function is as follows. ATPase subunit of a proteasome-like degradation complex; this subunit has chaperone activity. The binding of ATP and its subsequent hydrolysis by HslU are essential for unfolding of protein substrates subsequently hydrolyzed by HslV. HslU recognizes the N-terminal part of its protein substrates and unfolds these before they are guided to HslV for hydrolysis. This Francisella philomiragia subsp. philomiragia (strain ATCC 25017 / CCUG 19701 / FSC 153 / O#319-036) protein is ATP-dependent protease ATPase subunit HslU.